The sequence spans 622 residues: Modification methylase LlaI (622 aa).

It belongs to the N(4)/N(6)-methyltransferase family.

The enzyme catalyses a 2'-deoxyadenosine in DNA + S-adenosyl-L-methionine = an N(6)-methyl-2'-deoxyadenosine in DNA + S-adenosyl-L-homocysteine + H(+). In terms of biological role, an alpha subtype methylase that modifies unknown specific adenine residues, and protects the DNA from cleavage by the LlaI endonuclease. In Lactococcus lactis subsp. lactis (Streptococcus lactis), this protein is Modification methylase LlaI.